We begin with the raw amino-acid sequence, 1673 residues long: Protein TIC 214 (1673 aa).

Transmembrane regions (helical) follow at residues Ala32–Ile52, Leu70–Phe90, Pro93–Leu113, Leu130–Phe150, Met170–Cys190, and Phe218–Leu238. Composition is skewed to basic and acidic residues over residues Leu264–Thr276 and Ser283–Glu298. Disordered regions lie at residues Leu264–Glu302, Val547–Arg611, Asn1120–Leu1146, and Gln1370–Asp1433. A compositionally biased stretch (polar residues) spans Asp562–Pro586. The span at Thr597–Arg611 shows a compositional bias: basic and acidic residues. Over residues Asn1120 to Leu1135 the composition is skewed to polar residues. The span at Gln1370–Asn1379 shows a compositional bias: low complexity. 2 stretches are compositionally biased toward basic and acidic residues: residues Thr1380–Glu1399 and Thr1406–Glu1423.

Belongs to the TIC214 family. As to quaternary structure, part of the Tic complex.

The protein resides in the plastid. It localises to the chloroplast inner membrane. Functionally, involved in protein precursor import into chloroplasts. May be part of an intermediate translocation complex acting as a protein-conducting channel at the inner envelope. This Cuscuta gronovii (Common dodder) protein is Protein TIC 214.